A 422-amino-acid polypeptide reads, in one-letter code: Immunoglobulin mu Fc receptor (422 aa).

Residues 1–16 (MDFWLWLLYFLPVSGA) form the signal peptide. The Extracellular portion of the chain corresponds to 18–262 (RVLPEVQLNV…DRGLHIPIPE (245 aa)). One can recognise an Ig-like domain in the interval 24–121 (QLNVEWGGSI…GKTQKITLNV (98 aa)). 2 cysteine pairs are disulfide-bonded: Cys-37-Cys-103 and Cys-49-Cys-58. Thr-91 carries the post-translational modification Phosphothreonine. Residues 263-283 (FHILIPTFLGFLLLVLLGLVV) form a helical membrane-spanning segment. Over 284–422 (KRAIQRRRAS…YAPGPRSSCP (139 aa)) the chain is Cytoplasmic. Residues 290-308 (RRASSRRAGRLAMRRRGRG) show a composition bias toward basic residues. 2 disordered regions span residues 290-367 (RRAS…QVLE) and 391-422 (VNLE…SSCP). Positions 344 to 363 (LGPAEAPLLNAPASASPASP) are enriched in low complexity.

In terms of assembly, interacts (via Ig-like domain) with IGHM (via CH4/Cmu4 domain), both secreted and membrane-bound IgM; the interaction is glycan-independent and multivalent theoretically involving up to eight binding sites for the IgM pentamer. Phosphorylated on both Tyr and Ser residues. In terms of processing, O-glycosylated. Sialylated. O-linked glycans regulate trafficking to the plasma membrane. Expressed in pre-B cells, immature and mature B cells residing in primary and secondary lymphoid organs (at protein level). In the spleen, highly expressed in follicular and marginal zone B cells and at lower levels in germinal center B cells and plasma cells. Expressed in splenic dendritic cells and in granulocytes. In the peritoneum, expressed in B1-a and B-2 cell lineages. In the bone marrow, expressed in immature B cells and at a lower level in pro- and pre-B cells (at protein level). Expressed in M cells (at protein level).

The protein resides in the cell membrane. It localises to the early endosome membrane. The protein localises to the golgi apparatus. Its subcellular location is the trans-Golgi network membrane. It is found in the lysosome membrane. High-affinity Fc receptor for immunoglobulin M (IgM), both secreted and membrane-bound IgM. Primarily regulates IgM transport and homeostasis. In lymphoid cells, enables exocytosis of membrane-bound IgM on the plasma membrane as well as endocytosis of IgM-antigen complexes toward lysosomes for degradation. In mucosal epithelium, mediates retrotranscytosis of antigen-IgM complexes across mucosal M cells toward antigen-presenting cells in mucosal lymphoid tissues. Triggers costimulatory signaling and mediates most of IgM effector functions involved in B cell development and primary immune response to infection. Likely limits tonic IgM BCR signaling to self-antigens for proper negative selection of autoreactive B cells in the bone marrow and for the maintenance of regulatory B cell pool in peripheral lymphoid organs. Mediates antibody responses to T cell-dependent and T cell-independent antigens and promotes induction of an efficient neutralizing IgG response. Engages in cross-talk with antigen-receptor signaling via the non-canonical NF-kappa-B, MAP kinases and calcium signaling pathways. The chain is Immunoglobulin mu Fc receptor from Mus musculus (Mouse).